The chain runs to 415 residues: Arrestin red cell isoform 3 (415 aa).

Belongs to the arrestin family.

The protein localises to the cytoplasm. In Oncorhynchus mykiss (Rainbow trout), this protein is Arrestin red cell isoform 3.